The following is a 219-amino-acid chain: Tegument protein UL14 (219 aa).

Residues 159–219 form a disordered region; the sequence is VHTDAPSRPG…GFARDCPDGE (61 aa). Pro residues predominate over residues 186 to 202; the sequence is APPPETAPSPEPAPGPA.

Belongs to the alphaherpesvirinae HHV-1 UL14 protein family. Phosphorylated.

It is found in the virion tegument. Its subcellular location is the host cytoplasm. It localises to the host nucleus. Its function is as follows. Contributes to the nuclear transport of the viral transcriptional activator VP16 during the early phase of infection. Therefore, participates indirectly in the regulation of the immediate-early gene expression. Additionally, seems to be important for efficient nuclear targeting of capsids. The protein is Tegument protein UL14 of Human herpesvirus 2 (strain HG52) (HHV-2).